The following is a 226-amino-acid chain: Isoprenyl transferase (226 aa).

Aspartate 12 is an active-site residue. Mg(2+) is bound at residue aspartate 12. Substrate-binding positions include 13–16, tryptophan 17, lysine 25, histidine 29, and 57–59; these read GNAR and SSE. Asparagine 60 serves as the catalytic Proton acceptor. Substrate contacts are provided by residues tryptophan 61, arginine 63, arginine 174, and 180–182; that span reads RIS. Glutamate 193 is a binding site for Mg(2+).

Belongs to the UPP synthase family. As to quaternary structure, homodimer. Mg(2+) is required as a cofactor.

In terms of biological role, catalyzes the condensation of isopentenyl diphosphate (IPP) with allylic pyrophosphates generating different type of terpenoids. The chain is Isoprenyl transferase from Rickettsia bellii (strain RML369-C).